Reading from the N-terminus, the 472-residue chain is UDP-N-acetylmuramate--L-alanine ligase (472 aa).

Residue 122–128 (GTHGKTT) participates in ATP binding.

Belongs to the MurCDEF family.

Its subcellular location is the cytoplasm. The enzyme catalyses UDP-N-acetyl-alpha-D-muramate + L-alanine + ATP = UDP-N-acetyl-alpha-D-muramoyl-L-alanine + ADP + phosphate + H(+). The protein operates within cell wall biogenesis; peptidoglycan biosynthesis. In terms of biological role, cell wall formation. The protein is UDP-N-acetylmuramate--L-alanine ligase of Thermobifida fusca (strain YX).